The primary structure comprises 147 residues: 2-amino-4-hydroxy-6-hydroxymethyldihydropteridine pyrophosphokinase (147 aa).

This sequence belongs to the HPPK family.

The catalysed reaction is 6-hydroxymethyl-7,8-dihydropterin + ATP = (7,8-dihydropterin-6-yl)methyl diphosphate + AMP + H(+). Its pathway is cofactor biosynthesis; tetrahydrofolate biosynthesis; 2-amino-4-hydroxy-6-hydroxymethyl-7,8-dihydropteridine diphosphate from 7,8-dihydroneopterin triphosphate: step 4/4. Its function is as follows. Catalyzes the transfer of pyrophosphate from adenosine triphosphate (ATP) to 6-hydroxymethyl-7,8-dihydropterin, an enzymatic step in folate biosynthesis pathway. The polypeptide is 2-amino-4-hydroxy-6-hydroxymethyldihydropteridine pyrophosphokinase (folK) (Porphyromonas gingivalis (strain ATCC 33277 / DSM 20709 / CIP 103683 / JCM 12257 / NCTC 11834 / 2561)).